The following is a 347-amino-acid chain: Putative [LysW]-L-2-aminoadipate/[LysW]-L-glutamate phosphate reductase (347 aa).

9–12 serves as a coordination point for NADP(+); it reads SGYI. Cys-149 is an active-site residue. Asn-314 provides a ligand contact to NADP(+).

This sequence belongs to the NAGSA dehydrogenase family. Type 1 subfamily. LysY sub-subfamily.

It localises to the cytoplasm. The catalysed reaction is [amino-group carrier protein]-C-terminal-N-(1-carboxy-5-oxopentan-1-yl)-L-glutamine + phosphate + NADP(+) = [amino-group carrier protein]-C-terminal-N-(1-carboxy-5-phosphooxy-5-oxopentan-1-yl)-L-glutamine + NADPH + H(+). It carries out the reaction [amino-group carrier protein]-C-terminal-gamma-(L-glutamyl-5-semialdehyde)-L-glutamate + phosphate + NADP(+) = [amino-group carrier protein]-C-terminal-gamma-(5-phospho-L-glutamyl)-L-glutamate + NADPH + H(+). Its pathway is amino-acid biosynthesis; L-lysine biosynthesis via AAA pathway; L-lysine from L-alpha-aminoadipate (Thermus route): step 3/5. The protein operates within amino-acid biosynthesis; L-arginine biosynthesis. Functionally, involved in both the arginine and lysine biosynthetic pathways. In Picrophilus torridus (strain ATCC 700027 / DSM 9790 / JCM 10055 / NBRC 100828 / KAW 2/3), this protein is Putative [LysW]-L-2-aminoadipate/[LysW]-L-glutamate phosphate reductase.